The sequence spans 153 residues: Natriuretic peptides A (153 aa).

The N-terminal stretch at 1 to 25 (MGSFSTIMASFLLFLAFQLQGQTRA) is a signal peptide. 2 consecutive propeptides follow at residues 26–123 (NPVY…AAPR) and 93–103 (DGGALGRGSWD). The tract at residues 54–105 (EDEVMPPQVLSDQSEEERAALSPLPEVPPWTGEVNPAQRDGGALGRGSWDSS) is disordered. A Phosphoserine modification is found at serine 129. Residues cysteine 130 and cysteine 146 are joined by a disulfide bond. Positions 147–151 (NSFRY) are important for degradation of atrial natriuretic peptide by IDE.

The protein belongs to the natriuretic peptide family. Homodimer; disulfide-linked antiparallel dimer. In terms of processing, the precursor molecule is proteolytically cleaved by CORIN at Arg-123 to produce the atrial natriuretic peptide. Undergoes further proteolytic cleavage by unknown proteases to give rise to long-acting natriuretic peptide, vessel dilator and kaliuretic peptide. Additional processing gives rise to the auriculin and atriopeptin peptides. In the kidneys, alternative processing by an unknown protease results in the peptide urodilatin. Post-translationally, cleavage by MME initiates degradation of the factor and thereby regulates its activity. Degradation by IDE results in reduced activation of NPR1 (in vitro). During IDE degradation, the resulting products can temporarily stimulate NPR2 to produce cGMP, before the fragments are completely degraded and inactivated by IDE (in vitro). Degraded by IDE. In terms of processing, phosphorylation on Ser-129 decreases vasorelaxant activity.

Its subcellular location is the secreted. The protein resides in the perikaryon. It is found in the cell projection. Hormone that plays a key role in mediating cardio-renal homeostasis, and is involved in vascular remodeling and regulating energy metabolism. Acts by specifically binding and stimulating NPR1 to produce cGMP, which in turn activates effector proteins, such as PRKG1, that drive various biological responses. Regulates vasodilation, natriuresis, diuresis and aldosterone synthesis and is therefore essential for regulating blood pressure, controlling the extracellular fluid volume and maintaining the fluid-electrolyte balance. Also involved in inhibiting cardiac remodeling and cardiac hypertrophy by inducing cardiomyocyte apoptosis and attenuating the growth of cardiomyocytes and fibroblasts. Plays a role in female pregnancy by promoting trophoblast invasion and spiral artery remodeling in uterus, and thus prevents pregnancy-induced hypertension. In adipose tissue, acts in various cGMP- and PKG-dependent pathways to regulate lipid metabolism and energy homeostasis. This includes up-regulating lipid metabolism and mitochondrial oxygen utilization by activating the AMP-activated protein kinase (AMPK), and increasing energy expenditure by acting via MAPK11 to promote the UCP1-dependent thermogenesis of brown adipose tissue. Binds the clearance receptor NPR3 which removes the hormone from circulation. Functionally, may have a role in cardio-renal homeostasis through regulation of natriuresis, diuresis, vasodilation, and inhibiting aldosterone synthesis. In vitro, promotes the production of cGMP and induces vasodilation. May promote natriuresis, at least in part, by enhancing prostaglandin E2 synthesis resulting in the inhibition of renal Na+-K+-ATPase. However reports on the involvement of this peptide in mammal blood volume and blood pressure homeostasis are conflicting; according to a report, in vivo it is not sufficient to activate cGMP and does not inhibit collecting duct transport nor effect diuresis and natriuresis. Appears to bind to specific receptors that are distinct from the receptors bound by atrial natriuretic peptide and vessel dilator. Possibly enhances protein excretion in urine by decreasing proximal tubular protein reabsorption. In terms of biological role, may have a role in cardio-renal homeostasis through regulation of natriuresis, diuresis, and vasodilation. In vitro, promotes the production of cGMP and induces vasodilation. May promote natriuresis, at least in part, by enhancing prostaglandin E2 synthesis resulting in the inhibition of renal Na+-K+-ATPase. However reports on the involvement of this peptide in mammal blood volume and blood pressure homeostasis are conflicting; according to a report it is not sufficient to activate cGMP and does not inhibit collecting duct transport nor effect diuresis and natriuresis. Appears to bind to specific receptors that are distinct from the receptors bound by the atrial natriuretic and long-acting natriuretic peptides. Possibly functions in protein excretion in urine by maintaining the integrity of the proximal tubules and enhancing protein excretion by decreasing proximal tubular protein reabsorption. Its function is as follows. May have a role in cardio-renal homeostasis through regulation of diuresis and inhibiting aldosterone synthesis. In vitro, promotes the production of cGMP and induces vasodilation. May promote natriuresis, at least in part, by enhancing prostaglandin E2 synthesis resulting in the inhibition of renal Na+-K+-ATPase. May have a role in potassium excretion but not sodium excretion (natriuresis). Possibly enhances protein excretion in urine by decreasing proximal tubular protein reabsorption. Hormone produced in the kidneys that appears to be important for maintaining cardio-renal homeostasis. Mediates vasodilation, natriuresis and diuresis primarily in the renal system, in order to maintain the extracellular fluid volume and control the fluid-electrolyte balance. Specifically binds and stimulates cGMP production by renal transmembrane receptors, likely NPR1. Urodilatin not ANP, may be the natriuretic peptide responsible for the regulation of sodium and water homeostasis in the kidney. Functionally, may have a role in cardio-renal homeostasis through regulation of natriuresis and vasodilation. In vivo promotes natriuresis and in vitro, vasodilates renal artery strips. In terms of biological role, may have a role in cardio-renal homeostasis through regulation of regulation of natriuresis and vasodilation. In vivo promotes natriuresis. In vitro, vasodilates intestinal smooth muscle but not smooth muscle strips. Its function is as follows. May have a role in cardio-renal homeostasis through regulation of natriuresis and vasodilation. In vivo promotes natriuresis. In vitro, selectively vasodilates intestinal and vascular smooth muscle strips. May have a role in cardio-renal homeostasis through regulation of natriuresis and vasodilation. In vivo promotes natriuresis. In vitro, selectively vasodilates intestinal smooth muscle but not vascular smooth muscle strips. This chain is Natriuretic peptides A (NPPA), found in Equus caballus (Horse).